Consider the following 194-residue polypeptide: CASP-like protein 2D1 (194 aa).

The segment covering 1–16 (MRDNNNNNTREEERSS) has biased composition (basic and acidic residues). A disordered region spans residues 1–26 (MRDNNNNNTREEERSSSSKQQQPQAP). Residues 1-30 (MRDNNNNNTREEERSSSSKQQQPQAPMSLK) are Cytoplasmic-facing. Residues 31-51 (IIDSCLRLSVVPLSVATIWLT) form a helical membrane-spanning segment. Residues 52–74 (VTNHESNPDYGNLEYNSIMGLKY) lie on the Extracellular side of the membrane. Residues 75 to 95 (MVGVSAISAIYALLSTVSSWV) form a helical membrane-spanning segment. Residues 96–110 (TCLVSKAWLFFIPDQ) lie on the Cytoplasmic side of the membrane. A helical transmembrane segment spans residues 111–133 (VLAYVMTTSVAGATEIVYLLNKG). Residues 134–152 (DKIVTWSEMCSSYPHYCSK) are Extracellular-facing. The helical transmembrane segment at 153–173 (LTIALGLHVFVLFFFLFLSVI) threads the bilayer. Residues 174–194 (SAYRAFSPFDPPCDSQTNNDA) lie on the Cytoplasmic side of the membrane.

Belongs to the Casparian strip membrane proteins (CASP) family. Homodimer and heterodimers.

It is found in the cell membrane. The polypeptide is CASP-like protein 2D1 (Arabidopsis thaliana (Mouse-ear cress)).